A 249-amino-acid chain; its full sequence is Methyl-coenzyme M reductase I subunit gamma (249 aa).

Coenzyme M is bound at residue Arg120.

Belongs to the methyl-coenzyme M reductase gamma subunit family. MCR is a hexamer of two alpha, two beta, and two gamma chains, forming a dimer of heterotrimers. Requires coenzyme F430 as cofactor.

It is found in the cytoplasm. It carries out the reaction coenzyme B + methyl-coenzyme M = methane + coenzyme M-coenzyme B heterodisulfide. Its pathway is one-carbon metabolism; methyl-coenzyme M reduction; methane from methyl-coenzyme M: step 1/1. With respect to regulation, methyl-coenzyme M reductase activity is inhibited by 3-nitrooxypropanol (3-NOP) in vitro and in vivo, by oxidation of its active site Ni(I), which stops both growth and methanogenesis. Is also inhibited by the reaction product CoM-S-S-CoB. Functionally, component of the methyl-coenzyme M reductase (MCR) I that catalyzes the reductive cleavage of methyl-coenzyme M (CoM-S-CH3 or 2-(methylthio)ethanesulfonate) using coenzyme B (CoB or 7-mercaptoheptanoylthreonine phosphate) as reductant which results in the production of methane and the mixed heterodisulfide of CoB and CoM (CoM-S-S-CoB). This is the final step in methanogenesis. Neither N-6-mercaptohexanoylthreonine phosphate (H-S-HxoTP) nor N-8-mercaptooctanoylthreonine phosphate (H-SOcoTP) nor any other thiol compound such as CoA or CoM can substitute for CoB as the electron donor. This Methanothermobacter marburgensis (strain ATCC BAA-927 / DSM 2133 / JCM 14651 / NBRC 100331 / OCM 82 / Marburg) (Methanobacterium thermoautotrophicum) protein is Methyl-coenzyme M reductase I subunit gamma (mcrG).